The chain runs to 714 residues: Fatty acid oxidation complex subunit alpha (714 aa).

The segment at 1–190 is enoyl-CoA hydratase; it reads MEMASAFTLN…KLGLVDDVVP (190 aa). A 3-hydroxyacyl-CoA dehydrogenase region spans residues 306-714; the sequence is APLNSVGILG…FWKTTATDLQ (409 aa).

It in the N-terminal section; belongs to the enoyl-CoA hydratase/isomerase family. This sequence in the central section; belongs to the 3-hydroxyacyl-CoA dehydrogenase family. As to quaternary structure, heterotetramer of two alpha chains (FadJ) and two beta chains (FadI).

The protein localises to the cytoplasm. The enzyme catalyses a (3S)-3-hydroxyacyl-CoA = a (2E)-enoyl-CoA + H2O. It catalyses the reaction a 4-saturated-(3S)-3-hydroxyacyl-CoA = a (3E)-enoyl-CoA + H2O. The catalysed reaction is a (3S)-3-hydroxyacyl-CoA + NAD(+) = a 3-oxoacyl-CoA + NADH + H(+). It carries out the reaction (3S)-3-hydroxybutanoyl-CoA = (3R)-3-hydroxybutanoyl-CoA. It participates in lipid metabolism; fatty acid beta-oxidation. Functionally, catalyzes the formation of a hydroxyacyl-CoA by addition of water on enoyl-CoA. Also exhibits 3-hydroxyacyl-CoA epimerase and 3-hydroxyacyl-CoA dehydrogenase activities. The sequence is that of Fatty acid oxidation complex subunit alpha from Escherichia coli O9:H4 (strain HS).